Here is a 155-residue protein sequence, read N- to C-terminus: Transcriptional repressor NrdR (155 aa).

A zinc finger spans residues 3–34; the sequence is CPFCQHDDTQVLDTRVSEEGDSIRRRRRCTSC. In terms of domain architecture, ATP-cone spans 49–139; that stretch reads PVVVKKNGSR…VYKSFEDVAE (91 aa).

This sequence belongs to the NrdR family. It depends on Zn(2+) as a cofactor.

Functionally, negatively regulates transcription of bacterial ribonucleotide reductase nrd genes and operons by binding to NrdR-boxes. This chain is Transcriptional repressor NrdR, found in Janthinobacterium sp. (strain Marseille) (Minibacterium massiliensis).